The chain runs to 190 residues: Putative 3-methyladenine DNA glycosylase (190 aa).

This sequence belongs to the DNA glycosylase MPG family.

This Corynebacterium efficiens (strain DSM 44549 / YS-314 / AJ 12310 / JCM 11189 / NBRC 100395) protein is Putative 3-methyladenine DNA glycosylase.